Reading from the N-terminus, the 162-residue chain is Small ribosomal subunit protein uS5 (162 aa).

The S5 DRBM domain occupies 7–70; that stretch reads EEKMILIRRT…YARRNMVEVP (64 aa).

The protein belongs to the universal ribosomal protein uS5 family. Part of the 30S ribosomal subunit. Contacts proteins S4 and S8.

Its function is as follows. With S4 and S12 plays an important role in translational accuracy. Functionally, located at the back of the 30S subunit body where it stabilizes the conformation of the head with respect to the body. The polypeptide is Small ribosomal subunit protein uS5 (rpsE) (Thermus thermophilus (strain ATCC BAA-163 / DSM 7039 / HB27)).